A 449-amino-acid polypeptide reads, in one-letter code: Glycosyl hydrolase-like protein 1 (449 aa).

A beta-D-glucoside contacts are provided by residues Gln-22, His-119, 164 to 165 (NE), Tyr-292, Glu-350, Trp-393, and Tyr-406. Catalysis depends on Glu-165, which acts as the Proton donor. The active-site Nucleophile is Glu-350.

Belongs to the glycosyl hydrolase 1 family. As to expression, mainly expressed in flowers, flower buds and young leaves, and, to a lesser extent, in old leaves, stems and roots.

Its subcellular location is the cytoplasm. It functions in the pathway secondary metabolite biosynthesis; terpenoid biosynthesis. In terms of biological role, component of the oleanane-type triterpene saponins (e.g. saponarioside A and saponarioside B) biosynthetic pathway, leading to the production of natural products with detergent properties used as traditional sources of soap. Beta-glycosidase that catalyzes the transfer of glucose moiety to QA-triFRXX to produce QA-triF(Q)RXX via the elongation of the C-28 sugar chain with a D-quinovose. In Saponaria officinalis (Common soapwort), this protein is Glycosyl hydrolase-like protein 1.